The following is a 400-amino-acid chain: Lipase member N (400 aa).

An N-terminal signal peptide occupies residues 1-19; the sequence is MPMMWLFLTTACLIPGTLS. Positions 81-381 constitute an AB hydrolase-1 domain; that stretch reads PVVYMQHALF…DWNHFDFVWG (301 aa). The active-site Nucleophile is Ser175. An intrachain disulfide couples Cys249 to Cys258. A glycan (N-linked (GlcNAc...) asparagine) is linked at Asn274. Catalysis depends on charge relay system residues Asp346 and His375.

This sequence belongs to the AB hydrolase superfamily. Lipase family. In terms of tissue distribution, highly expressed in the epidermis. Also detected in other tissues, although at much lower levels, including liver and kidney.

It localises to the secreted. It carries out the reaction a sterol ester + H2O = a sterol + a fatty acid + H(+). The enzyme catalyses a triacylglycerol + H2O = a 1,2-diacylglycerol + a fatty acid + H(+). It catalyses the reaction a triacylglycerol + H2O = a diacylglycerol + a fatty acid + H(+). The catalysed reaction is a cholesterol ester + H2O = cholesterol + a fatty acid + H(+). Plays a highly specific role in the last step of keratinocyte differentiation. Contains two distinct domains: the alpha/beta hydrolase fold and the abhydrolase-associated lipase region, also features the consensus sequence of the active site of a genuine lipase. May have an essential function in lipid metabolism of the most differentiated epidermal layers. This is Lipase member N (Lipn) from Mus musculus (Mouse).